An 890-amino-acid polypeptide reads, in one-letter code: Translation initiation factor IF-2 (890 aa).

A disordered region spans residues I110–H216. Residues V135 to R148 show a composition bias toward basic residues. The segment covering K184–K199 has biased composition (basic and acidic residues). The segment covering Q200–L210 has biased composition (basic residues). Positions T387–E554 constitute a tr-type G domain. The segment at G396–T403 is G1. G396–T403 provides a ligand contact to GTP. Residues G421–H425 form a G2 region. The G3 stretch occupies residues D442–G445. GTP contacts are provided by residues D442 to H446 and N496 to D499. Residues N496–D499 form a G4 region. The G5 stretch occupies residues S532–R534.

The protein belongs to the TRAFAC class translation factor GTPase superfamily. Classic translation factor GTPase family. IF-2 subfamily.

It localises to the cytoplasm. Functionally, one of the essential components for the initiation of protein synthesis. Protects formylmethionyl-tRNA from spontaneous hydrolysis and promotes its binding to the 30S ribosomal subunits. Also involved in the hydrolysis of GTP during the formation of the 70S ribosomal complex. In Aliarcobacter butzleri (strain RM4018) (Arcobacter butzleri), this protein is Translation initiation factor IF-2.